The sequence spans 196 residues: MNEAVSPGALSTLFTDARTHNGWRETPVSDETLRELYAPIKWGPTSANCSPARIVFIRTVEGKERLHPALSSGNLQKTLTAPVTAIVAWDSEFYERLPLLFPHGDARSWFTSSPQLAEETAFRNSSMQAAYLIVACRALGLDTGPMSGFDRQHVDDAFFAGSTLKSNLLINIGYGDSSKLFARLPRLSFEEACGLL.

The protein belongs to the nitroreductase family. HadB/RutE subfamily. FMN is required as a cofactor.

It carries out the reaction 3-hydroxypropanoate + NADP(+) = 3-oxopropanoate + NADPH + H(+). Functionally, may reduce toxic product malonic semialdehyde to 3-hydroxypropionic acid, which is excreted. This chain is Probable malonic semialdehyde reductase RutE, found in Shigella sonnei (strain Ss046).